A 320-amino-acid chain; its full sequence is Transaldolase (320 aa).

Residue Lys-126 is the Schiff-base intermediate with substrate of the active site.

Belongs to the transaldolase family. Type 1 subfamily. In terms of assembly, homodimer.

The protein resides in the cytoplasm. The catalysed reaction is D-sedoheptulose 7-phosphate + D-glyceraldehyde 3-phosphate = D-erythrose 4-phosphate + beta-D-fructose 6-phosphate. It functions in the pathway carbohydrate degradation; pentose phosphate pathway; D-glyceraldehyde 3-phosphate and beta-D-fructose 6-phosphate from D-ribose 5-phosphate and D-xylulose 5-phosphate (non-oxidative stage): step 2/3. Functionally, transaldolase is important for the balance of metabolites in the pentose-phosphate pathway. This is Transaldolase from Bordetella bronchiseptica (strain ATCC BAA-588 / NCTC 13252 / RB50) (Alcaligenes bronchisepticus).